Consider the following 131-residue polypeptide: Holo-[acyl-carrier-protein] synthase (131 aa).

2 residues coordinate Mg(2+): Asp8 and Glu57.

It belongs to the P-Pant transferase superfamily. AcpS family. Mg(2+) is required as a cofactor.

It is found in the cytoplasm. The enzyme catalyses apo-[ACP] + CoA = holo-[ACP] + adenosine 3',5'-bisphosphate + H(+). Transfers the 4'-phosphopantetheine moiety from coenzyme A to a Ser of acyl-carrier-protein. The chain is Holo-[acyl-carrier-protein] synthase from Thiobacillus denitrificans (strain ATCC 25259 / T1).